An 892-amino-acid polypeptide reads, in one-letter code: Putative disease resistance protein At4g10780 (892 aa).

A coiled-coil region spans residues 24–63; sequence SLGNYIHKLKDNIVALEKAIEDLTATRDDVLRRVQMEEGK. The NB-ARC domain occupies 137–440; it reads IVAAPAPKLE…ICEGFIDGNI (304 aa). 180 to 187 provides a ligand contact to ATP; it reads GMGGVGKT. 6 LRR repeats span residues 515–536, 537–559, 562–584, 586–608, 609–631, and 632–654; these read AVRR…PECP, ELTT…FFRH, KLVV…ISEL, ALRY…QDLK, TLIH…SKLS, and SLRT…KELH.

Belongs to the disease resistance NB-LRR family.

In terms of biological role, potential disease resistance protein. In Arabidopsis thaliana (Mouse-ear cress), this protein is Putative disease resistance protein At4g10780.